The chain runs to 385 residues: 4-hydroxy-3-methylbut-2-en-1-yl diphosphate synthase (flavodoxin) 1 (385 aa).

[4Fe-4S] cluster contacts are provided by Cys280, Cys283, Cys315, and Glu322.

Belongs to the IspG family. [4Fe-4S] cluster is required as a cofactor.

The enzyme catalyses (2E)-4-hydroxy-3-methylbut-2-enyl diphosphate + oxidized [flavodoxin] + H2O + 2 H(+) = 2-C-methyl-D-erythritol 2,4-cyclic diphosphate + reduced [flavodoxin]. It functions in the pathway isoprenoid biosynthesis; isopentenyl diphosphate biosynthesis via DXP pathway; isopentenyl diphosphate from 1-deoxy-D-xylulose 5-phosphate: step 5/6. Converts 2C-methyl-D-erythritol 2,4-cyclodiphosphate (ME-2,4cPP) into 1-hydroxy-2-methyl-2-(E)-butenyl 4-diphosphate. The polypeptide is 4-hydroxy-3-methylbut-2-en-1-yl diphosphate synthase (flavodoxin) 1 (Streptomyces avermitilis (strain ATCC 31267 / DSM 46492 / JCM 5070 / NBRC 14893 / NCIMB 12804 / NRRL 8165 / MA-4680)).